The primary structure comprises 525 residues: EGF domain-specific O-linked N-acetylglucosamine transferase (525 aa).

Positions 1-24 are cleaved as a signal peptide; it reads MVPLRLVLLLHIIHFSCENEVGSA. The Required for optimal activity signature appears at 293–295; it reads DYE. N-linked (GlcNAc...) asparagine glycosylation occurs at asparagine 352. Positions 522 to 525 match the Prevents secretion from ER motif; the sequence is RDEL.

This sequence belongs to the glycosyltransferase 61 family.

The protein resides in the endoplasmic reticulum lumen. The catalysed reaction is L-seryl-[protein] + UDP-N-acetyl-alpha-D-glucosamine = 3-O-(N-acetyl-beta-D-glucosaminyl)-L-seryl-[protein] + UDP + H(+). It catalyses the reaction L-threonyl-[protein] + UDP-N-acetyl-alpha-D-glucosamine = 3-O-(N-acetyl-beta-D-glucosaminyl)-L-threonyl-[protein] + UDP + H(+). Catalyzes the transfer of a single N-acetylglucosamine from UDP-GlcNAc to a serine or threonine residue in extracellular proteins resulting in their modification with a beta-linked N-acetylglucosamine (O-GlcNAc). Specifically glycosylates the Thr residue located between the fifth and sixth conserved cysteines of folded EGF-like domains. The chain is EGF domain-specific O-linked N-acetylglucosamine transferase (eogt) from Xenopus laevis (African clawed frog).